A 163-amino-acid polypeptide reads, in one-letter code: Nucleotide-binding protein MAP_4063c (163 aa).

Belongs to the YajQ family.

Nucleotide-binding protein. The sequence is that of Nucleotide-binding protein MAP_4063c from Mycolicibacterium paratuberculosis (strain ATCC BAA-968 / K-10) (Mycobacterium paratuberculosis).